The primary structure comprises 237 residues: Probable septum site-determining protein MinC (237 aa).

It belongs to the MinC family. Interacts with MinD and FtsZ.

Cell division inhibitor that blocks the formation of polar Z ring septums. Rapidly oscillates between the poles of the cell to destabilize FtsZ filaments that have formed before they mature into polar Z rings. Prevents FtsZ polymerization. This Neisseria gonorrhoeae protein is Probable septum site-determining protein MinC.